A 172-amino-acid chain; its full sequence is Adenine phosphoribosyltransferase (172 aa).

The protein belongs to the purine/pyrimidine phosphoribosyltransferase family. As to quaternary structure, homodimer.

It is found in the cytoplasm. It catalyses the reaction AMP + diphosphate = 5-phospho-alpha-D-ribose 1-diphosphate + adenine. It functions in the pathway purine metabolism; AMP biosynthesis via salvage pathway; AMP from adenine: step 1/1. Functionally, catalyzes a salvage reaction resulting in the formation of AMP, that is energically less costly than de novo synthesis. The polypeptide is Adenine phosphoribosyltransferase (Staphylococcus aureus (strain bovine RF122 / ET3-1)).